A 566-amino-acid polypeptide reads, in one-letter code: MERPSPCGSWLVGCLFTIAVFQPPVQVLGDAGKVYIAPLRDTANLPCPLFLWPNMVLSEMRWYRPGHLPRTQAVHVFRDGQDRDEDLMPEYKGRTALVRDAHKESYILQISNVRLEDRGLYQCQVWVGNSSREDNVTLQVAVLGSDPYIHVKGYDAGWIELLCQSVGWFPKPWTEWRDTTGRALLSLSEVHSLDENGLFRTAVSSRIRDNALGNVSCTIHNEALGQEKTTAMIIGAPERGSLSSPAVALSVVLPVLGLLILLGIWLICKQKKSKEKLLYEQAMEVENLLEDHAKEKGRLHKALKKLRSELKLKRAAANAGWRRARLHFVAVTLDPDTAHPKLILSEDRRCVRLGDRKRPVPDNPERFDFVVSVLGSEYFTTGCHYWEVYVGEKTKWILGVCSESVSRKGKVTASPANGHWLVRQSRGNEYEALTSPQTSFRLKESPKCVGIFLDYEAGIISFYNVTDKSHIFTFTHSFSSPLRPFFEPCLHDEGKNTAPLIICTELQKSEESIVPKQEGKDRANGDVSLKMNPSLLSPQGSELFLLNDTWPSNLGPALKGLKVPSL.

Positions 1–29 (MERPSPCGSWLVGCLFTIAVFQPPVQVLG) are cleaved as a signal peptide. The 110-residue stretch at 30–139 (DAGKVYIAPL…SSREDNVTLQ (110 aa)) folds into the Ig-like V-type domain. Over 30–246 (DAGKVYIAPL…PERGSLSSPA (217 aa)) the chain is Extracellular. C47 and C123 are oxidised to a cystine. 2 N-linked (GlcNAc...) asparagine glycosylation sites follow: N135 and N214. The chain crosses the membrane as a helical span at residues 247 to 267 (VALSVVLPVLGLLILLGIWLI). Over 268-566 (CKQKKSKEKL…ALKGLKVPSL (299 aa)) the chain is Cytoplasmic. The B30.2/SPRY domain occupies 311-509 (KLKRAAANAG…LIICTELQKS (199 aa)). A Phosphoserine modification is found at S509.

It belongs to the immunoglobulin superfamily. BTN/MOG family. In terms of processing, glycosylated. In terms of tissue distribution, expressed in spleen and bone marrow.

The protein resides in the cell membrane. Its subcellular location is the cytoplasm. Possible role as a cell-adhesion or receptor molecule of erythroid cells. This chain is Erythroid membrane-associated protein (Ermap), found in Mus musculus (Mouse).